The following is a 208-amino-acid chain: Cysteine-rich protein 2 (208 aa).

One can recognise an LIM zinc-binding 1 domain in the interval Cys-5 to Cys-57. An N6-acetyllysine modification is found at Lys-23. The residue at position 104 (Ser-104) is a Phosphoserine. One can recognise an LIM zinc-binding 2 domain in the interval Cys-126–Cys-178. An N6-acetyllysine mark is found at Lys-138 and Lys-144.

Interacts with TGFB1I1.

The polypeptide is Cysteine-rich protein 2 (Crip2) (Mus musculus (Mouse)).